The following is a 92-amino-acid chain: UPF0237 protein MA_3235 (92 aa).

Residues 7 to 81 (IITVIGSDRV…KSLGVEVKVQ (75 aa)) form the ACT domain.

The protein belongs to the UPF0237 family.

The sequence is that of UPF0237 protein MA_3235 from Methanosarcina acetivorans (strain ATCC 35395 / DSM 2834 / JCM 12185 / C2A).